The sequence spans 283 residues: NADPH-dependent 3-dehydrocapnine reductase (283 aa).

Tyrosine 153 (proton acceptor) is an active-site residue.

The protein belongs to the short-chain dehydrogenases/reductases (SDR) family.

It catalyses the reaction 3-oxocapnine + NADPH + H(+) = capnine + NADP(+). It functions in the pathway lipid metabolism. Its function is as follows. Reductase involved in the biosynthesis of capnine, a sulfonolipid present in the outer membrane of gliding Bacteroidetes and essential for gliding motility. Catalyzes the reduction of 3-dehydrocapnine to capnine. This Ornithobacterium rhinotracheale protein is NADPH-dependent 3-dehydrocapnine reductase.